The primary structure comprises 452 residues: Probable intron-encoded endonuclease 2 (452 aa).

The next 3 membrane-spanning stretches (helical) occupy residues 1 to 21 (MNIT…NRKN), 22 to 42 (IILM…LILV), and 57 to 77 (IYII…LVAF). A ndh-4L exon 1 encoded region spans residues 1–80 (MNITLILFLI…LAILVAFYRL (80 aa)). Residues 81 to 452 (INSPVKNPRS…SLEGGMNKNI (372 aa)) form a ndh-4L intron 1 encoded region.

In the N-terminal section; belongs to the complex I subunit 4L family. It in the C-terminal section; belongs to the LAGLIDADG endonuclease family.

The protein localises to the mitochondrion membrane. Functionally, mitochondrial DNA endonuclease involved in intron homing. This Neurospora crassa (strain ATCC 24698 / 74-OR23-1A / CBS 708.71 / DSM 1257 / FGSC 987) protein is Probable intron-encoded endonuclease 2.